The sequence spans 245 residues: Probable GTP-binding protein EngB (245 aa).

The EngB-type G domain maps to 46 to 223 (DVPEIAFVGR…AQHLWDWAHP (178 aa)). GTP is bound by residues 54-61 (GRSNAGKS), 81-85 (GRTQS), 103-106 (DLPG), 173-176 (TKSD), and 202-204 (FSS). The Mg(2+) site is built by Ser-61 and Thr-83. A disordered region spans residues 219–245 (DWAHPPEKPAKKPKAEPAAEAATGDEG). Residues 222 to 235 (HPPEKPAKKPKAEP) show a composition bias toward basic and acidic residues. The segment covering 236–245 (AAEAATGDEG) has biased composition (low complexity).

Belongs to the TRAFAC class TrmE-Era-EngA-EngB-Septin-like GTPase superfamily. EngB GTPase family. Mg(2+) is required as a cofactor.

Necessary for normal cell division and for the maintenance of normal septation. The protein is Probable GTP-binding protein EngB of Polaromonas sp. (strain JS666 / ATCC BAA-500).